A 337-amino-acid polypeptide reads, in one-letter code: DNA-directed RNA polymerase subunit alpha (337 aa).

Residues 1–233 (MVREEVVGST…DLFIPFLHAE (233 aa)) are alpha N-terminal domain (alpha-NTD). The tract at residues 265–337 (KEIALKCIFI…FAIDLPKNKF (73 aa)) is alpha C-terminal domain (alpha-CTD).

This sequence belongs to the RNA polymerase alpha chain family. As to quaternary structure, in plastids the minimal PEP RNA polymerase catalytic core is composed of four subunits: alpha, beta, beta', and beta''. When a (nuclear-encoded) sigma factor is associated with the core the holoenzyme is formed, which can initiate transcription.

It is found in the plastid. The protein resides in the chloroplast. The enzyme catalyses RNA(n) + a ribonucleoside 5'-triphosphate = RNA(n+1) + diphosphate. Functionally, DNA-dependent RNA polymerase catalyzes the transcription of DNA into RNA using the four ribonucleoside triphosphates as substrates. This Acorus gramineus (Dwarf sweet flag) protein is DNA-directed RNA polymerase subunit alpha.